The sequence spans 383 residues: Teichoic acid glycerol-phosphate primase (383 aa).

The protein belongs to the CDP-glycerol glycerophosphotransferase family.

It localises to the cell membrane. It carries out the reaction N-acetyl-beta-D-mannosaminyl-(1-&gt;4)-N-acetyl-alpha-D-glucosaminyl di-trans,octa-cis-undecaprenyl diphosphate + CDP-glycerol = 4-O-[(2R)-glycerylphospho]-N-acetyl-beta-D-mannosaminyl-(1-&gt;4)-N-acetyl-alpha-D-glucosaminyl di-trans,octa-cis-undecaprenyl diphosphate + CMP + H(+). It functions in the pathway cell wall biogenesis; poly(ribitol phosphate) teichoic acid biosynthesis. In terms of biological role, catalyzes the addition of a single glycerol phosphate residue to the prenoldiphosphate-linked disaccharide. The protein is Teichoic acid glycerol-phosphate primase (tarB) of Bacillus spizizenii (strain ATCC 23059 / NRRL B-14472 / W23) (Bacillus subtilis subsp. spizizenii).